Here is a 473-residue protein sequence, read N- to C-terminus: MGAVISLPVSMAGSFVASCFGGCCSNLVTKTASSLGSSSLGTRLLYAVWLLLNSLISWVSYSANKSILWPGKTCTGTGECGFFTVHRLNFALGCLHLILALVLTGVKSTNDVRAALQNSWWSLKFILYLCLIVLSFVIPNDFYIFFSKWVSVPSGAIFILVGLILLVDFAHEWAETCISHVESEDEDSSFWQRFLVLGTTSMYTASIIMTVVMYVMFCHQQCNMNQTAVTVNLILTVITLVLSVNPKIQEANPKSGLAQSSMVSVYCTYLTMSAMSSEPDDKMCNPLVRSSGTRKFSIILGSLFTFIAIAYTTTRAAANSAFQGTNTNGAIYLGNDIEYEGLGGQTRNQLRYEAIKQAVEEGSLPESALYDTAWLGTSSPTGAMDNQNDDERTGTKYNYTLFHVIFFLATQWIAILLTINVTQDDVGDFIPVGRTYFYSWVKIVSAWICYALYGWTVVAPAIMPDRFDYENYY.

Over Met-1–Ser-6 the chain is Cytoplasmic. A helical membrane pass occupies residues Leu-7–Thr-29. Over Lys-30–Ser-38 the chain is Vacuolar. A helical membrane pass occupies residues Ser-39 to Tyr-61. The Cytoplasmic portion of the chain corresponds to Ser-62–Gly-81. A helical transmembrane segment spans residues Phe-82–Thr-104. Residues Gly-105–Asn-118 are Vacuolar-facing. The chain crosses the membrane as a helical span at residues Ser-119–Ile-138. The Cytoplasmic segment spans residues Pro-139 to Ile-144. The helical transmembrane segment at Phe-145–Val-167 threads the bilayer. Topologically, residues Asp-168–Phe-194 are vacuolar. The chain crosses the membrane as a helical span at residues Leu-195–Phe-217. At Cys-218–Ala-228 the chain is on the cytoplasmic side. Residues Val-229 to Pro-246 traverse the membrane as a helical segment. At Lys-247–Lys-295 the chain is on the vacuolar side. Residues Phe-296–Ala-318 form a helical membrane-spanning segment. Residues Asn-319 to Asn-398 are Cytoplasmic-facing. Residues Tyr-399–Val-421 form a helical membrane-spanning segment. The Vacuolar segment spans residues Thr-422–Thr-435. Residues Tyr-436–Val-458 form a helical membrane-spanning segment. The Cytoplasmic segment spans residues Ala-459–Tyr-473.

It belongs to the TDE1 family.

It localises to the membrane. This chain is Membrane protein TMS1 (TMS1), found in Saccharomyces cerevisiae (strain ATCC 204508 / S288c) (Baker's yeast).